A 745-amino-acid chain; its full sequence is Fatty acid oxidation complex subunit alpha (745 aa).

Residues 47–209 (VNTLKAKFAE…KMGLVDDVVP (163 aa)) form an enoyl-CoA hydratase region. The interval 325-745 (RAIHRVGVLG…LDEAAITAHN (421 aa)) is 3-hydroxyacyl-CoA dehydrogenase.

This sequence in the N-terminal section; belongs to the enoyl-CoA hydratase/isomerase family. The protein in the central section; belongs to the 3-hydroxyacyl-CoA dehydrogenase family. Heterotetramer of two alpha chains (FadJ) and two beta chains (FadI).

It is found in the cytoplasm. The enzyme catalyses a (3S)-3-hydroxyacyl-CoA = a (2E)-enoyl-CoA + H2O. The catalysed reaction is a 4-saturated-(3S)-3-hydroxyacyl-CoA = a (3E)-enoyl-CoA + H2O. It carries out the reaction a (3S)-3-hydroxyacyl-CoA + NAD(+) = a 3-oxoacyl-CoA + NADH + H(+). It catalyses the reaction (3S)-3-hydroxybutanoyl-CoA = (3R)-3-hydroxybutanoyl-CoA. It participates in lipid metabolism; fatty acid beta-oxidation. Its function is as follows. Catalyzes the formation of a hydroxyacyl-CoA by addition of water on enoyl-CoA. Also exhibits 3-hydroxyacyl-CoA epimerase and 3-hydroxyacyl-CoA dehydrogenase activities. This chain is Fatty acid oxidation complex subunit alpha, found in Yersinia enterocolitica serotype O:8 / biotype 1B (strain NCTC 13174 / 8081).